We begin with the raw amino-acid sequence, 486 residues long: Cysteine--tRNA ligase (486 aa).

Position 30 (Cys-30) interacts with Zn(2+). The 'HIGH' region motif lies at 32-42 (PTVYDRAHLGN). Cys-221, His-246, and Glu-250 together coordinate Zn(2+). The 'KMSKS' region motif lies at 279–283 (KMSKS). Residue Lys-282 coordinates ATP.

This sequence belongs to the class-I aminoacyl-tRNA synthetase family. Monomer. Requires Zn(2+) as cofactor.

The protein localises to the cytoplasm. The catalysed reaction is tRNA(Cys) + L-cysteine + ATP = L-cysteinyl-tRNA(Cys) + AMP + diphosphate. In Cereibacter sphaeroides (strain ATCC 17025 / ATH 2.4.3) (Rhodobacter sphaeroides), this protein is Cysteine--tRNA ligase.